Consider the following 280-residue polypeptide: Ribonuclease Z (280 aa).

7 residues coordinate Zn(2+): H61, H63, D65, H66, H153, D176, and H240. D65 (proton acceptor) is an active-site residue.

Belongs to the RNase Z family. Homodimer. Zn(2+) is required as a cofactor.

The catalysed reaction is Endonucleolytic cleavage of RNA, removing extra 3' nucleotides from tRNA precursor, generating 3' termini of tRNAs. A 3'-hydroxy group is left at the tRNA terminus and a 5'-phosphoryl group is left at the trailer molecule.. Its function is as follows. Zinc phosphodiesterase, which displays some tRNA 3'-processing endonuclease activity. Probably involved in tRNA maturation, by removing a 3'-trailer from precursor tRNA. The sequence is that of Ribonuclease Z from Mycobacterium bovis (strain BCG / Pasteur 1173P2).